The sequence spans 529 residues: MSNAPFLSEVSKRRTFAIISHPDAGKTTITEKVLLFGRAIQTAGTVKGRGSSQHAKSDWMEMEKERGISVTTSVMQFPYNDCLVNLLDTPGHEDFSEDTYRTLTAVDSCLMVIDAAKGVEDRTRKLMEVTRLRDTPIVTFMNKLDRDIRDPMELLDEVESELNIACAPVSWPIGCGKEFKGVYHIHRDETILYSTGQGHTIQEQRIIKGLDNPDLDAEVGADLAEQLREELELVLGASHEFDQEMFLKGELTPVFFGTALGNFGVDHMLDGLTDWAPAPLPRQANERAVEATEDKFTGFVFKIQANMDPKHRDRIAFMRIVSGTYTQGMKMNHVRLGKQVNISDAVTFMAGDRSRAEAAYAGDIIGLHNHGTIQIGDTFTQGESLKFSGIPNFAPELFRRIRLRDPLKQKQLLKGLVQLSEEGAVQVFRPLQNNDLIVGAVGVLQFDVVVARLKSEYNVEAIYESVNVATARWVECGDAKKLDEFQRKNQTNLALDGGDNLTYIAPTMVNLNLAKERFPEVEFRATREH.

Residues 11–280 (SKRRTFAIIS…GLTDWAPAPL (270 aa)) enclose the tr-type G domain. GTP contacts are provided by residues 20–27 (SHPDAGKT), 88–92 (DTPGH), and 142–145 (NKLD).

Belongs to the TRAFAC class translation factor GTPase superfamily. Classic translation factor GTPase family. PrfC subfamily.

It localises to the cytoplasm. In terms of biological role, increases the formation of ribosomal termination complexes and stimulates activities of RF-1 and RF-2. It binds guanine nucleotides and has strong preference for UGA stop codons. It may interact directly with the ribosome. The stimulation of RF-1 and RF-2 is significantly reduced by GTP and GDP, but not by GMP. The polypeptide is Peptide chain release factor 3 (Vibrio vulnificus (strain CMCP6)).